Consider the following 498-residue polypeptide: ATP synthase subunit beta, chloroplastic (498 aa).

172 to 179 (GGAGVGKT) is an ATP binding site.

The protein belongs to the ATPase alpha/beta chains family. As to quaternary structure, F-type ATPases have 2 components, CF(1) - the catalytic core - and CF(0) - the membrane proton channel. CF(1) has five subunits: alpha(3), beta(3), gamma(1), delta(1), epsilon(1). CF(0) has four main subunits: a(1), b(1), b'(1) and c(9-12).

Its subcellular location is the plastid. It localises to the chloroplast thylakoid membrane. It catalyses the reaction ATP + H2O + 4 H(+)(in) = ADP + phosphate + 5 H(+)(out). Produces ATP from ADP in the presence of a proton gradient across the membrane. The catalytic sites are hosted primarily by the beta subunits. The sequence is that of ATP synthase subunit beta, chloroplastic from Montinia caryophyllacea (Wild clove bush).